A 325-amino-acid chain; its full sequence is Eukaryotic translation initiation factor 3 subunit I (325 aa).

WD repeat units follow at residues 1–39, 43–81, 87–127, 135–175, and 180–217; these read MKPI…VWYS, ERLG…LWDC, LALL…FFDL, NNEP…QYSA, and VLVN…LFDS. Thr219 carries the post-translational modification Phosphothreonine. WD repeat units lie at residues 221-267 and 275-316; these read EHQK…KFEA and EEEF…YFDP. The residue at position 264 (Lys264) is an N6-acetyllysine. Lys282 is covalently cross-linked (Glycyl lysine isopeptide (Lys-Gly) (interchain with G-Cter in ubiquitin)). Tyr308 is subject to Phosphotyrosine.

As to quaternary structure, component of the eukaryotic translation initiation factor 3 (eIF-3) complex, which is composed of 13 subunits: EIF3A, EIF3B, EIF3C, EIF3D, EIF3E, EIF3F, EIF3G, EIF3H, EIF3I, EIF3J, EIF3K, EIF3L and EIF3M. The eIF-3 complex appears to include 3 stable modules: module A is composed of EIF3A, EIF3B, EIF3G and EIF3I; module B is composed of EIF3F, EIF3H, and EIF3M; and module C is composed of EIF3C, EIF3D, EIF3E, EIF3K and EIF3L. EIF3C of module C binds EIF3B of module A and EIF3H of module B, thereby linking the three modules. EIF3J is a labile subunit that binds to the eIF-3 complex via EIF3B. The eIF-3 complex interacts with RPS6KB1 under conditions of nutrient depletion. Mitogenic stimulation leads to binding and activation of a complex composed of MTOR and RPTOR, leading to phosphorylation and release of RPS6KB1 and binding of EIF4B to eIF-3. In terms of processing, phosphorylated by TGF-beta type II receptor.

Its subcellular location is the cytoplasm. Functionally, component of the eukaryotic translation initiation factor 3 (eIF-3) complex, which is required for several steps in the initiation of protein synthesis. The eIF-3 complex associates with the 40S ribosome and facilitates the recruitment of eIF-1, eIF-1A, eIF-2:GTP:methionyl-tRNAi and eIF-5 to form the 43S pre-initiation complex (43S PIC). The eIF-3 complex stimulates mRNA recruitment to the 43S PIC and scanning of the mRNA for AUG recognition. The eIF-3 complex is also required for disassembly and recycling of post-termination ribosomal complexes and subsequently prevents premature joining of the 40S and 60S ribosomal subunits prior to initiation. The eIF-3 complex specifically targets and initiates translation of a subset of mRNAs involved in cell proliferation, including cell cycling, differentiation and apoptosis, and uses different modes of RNA stem-loop binding to exert either translational activation or repression. The polypeptide is Eukaryotic translation initiation factor 3 subunit I (Homo sapiens (Human)).